Reading from the N-terminus, the 525-residue chain is GMP synthase [glutamine-hydrolyzing] (525 aa).

In terms of domain architecture, Glutamine amidotransferase type-1 spans 9 to 207; the sequence is RILILDFGSQ…VLDICGCEAL (199 aa). The Nucleophile role is filled by Cys-86. Catalysis depends on residues His-181 and Glu-183. Positions 208-400 constitute a GMPS ATP-PPase domain; it reads WTPSKIAEDA…LGLPYDMVYR (193 aa). 235–241 provides a ligand contact to ATP; the sequence is SGGVDSS.

As to quaternary structure, homodimer.

It catalyses the reaction XMP + L-glutamine + ATP + H2O = GMP + L-glutamate + AMP + diphosphate + 2 H(+). Its pathway is purine metabolism; GMP biosynthesis; GMP from XMP (L-Gln route): step 1/1. Its function is as follows. Catalyzes the synthesis of GMP from XMP. The polypeptide is GMP synthase [glutamine-hydrolyzing] (Pseudomonas fluorescens (strain Pf0-1)).